A 460-amino-acid chain; its full sequence is Baeyer-Villiger oxidase AgnL3 (460 aa).

The protein belongs to the questin oxidase family. It depends on NADPH as a cofactor.

The protein operates within secondary metabolite biosynthesis. Baeyer-Villiger oxidase; part of the gene cluster that mediates the biosynthesis of agnestins, dihydroxy-xanthone metabolites. The pathway begins with the assembly and cyclization of atrochrysone thioester by the non-reducing polyketide synthase Agnpks1. The atrochrysone carboxyl ACP thioesterase AgnL7 then breaks the thioester bond and releases the atrochrysone carboxylic acid as the first enzyme-free intermediate. The decarboxylase AgnL1 then catalyzes the concerted decarboxylation-elimination required to convert atochrysone carboxylic acid into emodin anthrone, which is further oxidized to emodin by the anthrone oxygenase AgnL2. Emodin then undergoes reduction catalyzed by the oxidoreductase AgnL4 to yield the dihydroquinone tautomer which is the substrate for reduction by the short chain dehydrogenase AgnL6 reduction to produce hydroxyketone, followed by AgnL8 dehydration and likely spontaneous autoxidation to chrysophanol. Baeyer-Villiger oxidation by the oxidase AgnL3 leads to monodictyphenone via cleavage of the C-10/C-10a bond of chrysophanol. Alternative cleavage at the C-4a/C-10 bond of chrysophanol also leads to the formation some cephalone F. Further conversion to agnestins A and B, requires reduction to dihydro-monodictyphenone, oxidation to agnestin C probably via an epoxide, and rearrangement to either agnestin A or agnestin B directly, although agnestin A or agnestin B can also interconvert. Within the cluster, AgnR1 is the only unassigned oxidoreductase present which could be involved in this conversion. However, AgnR1 seems not to be involved in this step, and thus genes involved in the proposed oxidation/reduction may be located elsewhere on the genome. Further agnestin A derivatives are probably formed by spontaneous decarboxylations, dehydrations and methanolysis reactions. The protein is Baeyer-Villiger oxidase AgnL3 of Paecilomyces divaricatus (Penicillium divaricatum).